The chain runs to 360 residues: 3-dehydroquinate synthase (360 aa).

NAD(+)-binding positions include 71–76 (DGEQYK), 105–109 (GVVGD), 129–130 (TT), lysine 142, lysine 151, and 169–172 (TLNT). Zn(2+) contacts are provided by glutamate 184, histidine 248, and histidine 265.

This sequence belongs to the sugar phosphate cyclases superfamily. Dehydroquinate synthase family. Requires Co(2+) as cofactor. Zn(2+) is required as a cofactor. It depends on NAD(+) as a cofactor.

It localises to the cytoplasm. It catalyses the reaction 7-phospho-2-dehydro-3-deoxy-D-arabino-heptonate = 3-dehydroquinate + phosphate. It functions in the pathway metabolic intermediate biosynthesis; chorismate biosynthesis; chorismate from D-erythrose 4-phosphate and phosphoenolpyruvate: step 2/7. In terms of biological role, catalyzes the conversion of 3-deoxy-D-arabino-heptulosonate 7-phosphate (DAHP) to dehydroquinate (DHQ). The chain is 3-dehydroquinate synthase from Coxiella burnetii (strain RSA 331 / Henzerling II).